The following is a 686-amino-acid chain: tRNA wybutosine-synthesizing protein 4 (686 aa).

The segment covering 1–10 (MGPRSRERRA) has biased composition (basic and acidic residues). The segment at 1–21 (MGPRSRERRAGAVQNTNDSSA) is disordered. S-adenosyl-L-methionine contacts are provided by residues Arg59, Gly89, Asp114, 161 to 162 (DL), and Glu188.

Belongs to the methyltransferase superfamily. LCMT family. In terms of assembly, interacts with RNF144B/IBRDC2.

It carries out the reaction 7-[(3S)-3-amino-3-carboxypropyl]wyosine(37) in tRNA(Phe) + S-adenosyl-L-methionine = 7-[(3S)-(3-amino-3-methoxycarbonyl)propyl]wyosine(37) in tRNA(Phe) + S-adenosyl-L-homocysteine. It catalyses the reaction 7-[(3S)-(3-amino-3-methoxycarbonyl)propyl]wyosine(37) in tRNA(Phe) + S-adenosyl-L-methionine + CO2 = wybutosine(37) in tRNA(Phe) + S-adenosyl-L-homocysteine + 2 H(+). It functions in the pathway tRNA modification; wybutosine-tRNA(Phe) biosynthesis. Probable S-adenosyl-L-methionine-dependent methyltransferase that acts as a component of the wybutosine biosynthesis pathway. Wybutosine is a hyper modified guanosine with a tricyclic base found at the 3'-position adjacent to the anticodon of eukaryotic phenylalanine tRNA. May methylate the carboxyl group of leucine residues to form alpha-leucine ester residues. This chain is tRNA wybutosine-synthesizing protein 4 (LCMT2), found in Homo sapiens (Human).